We begin with the raw amino-acid sequence, 195 residues long: CASP-like protein 1B1 (195 aa).

Residues 1–22 (MGLQNEEKLELGCTGLQPKPKK) are Cytoplasmic-facing. Residues 23–43 (WVLLMVRVVAFLATAAATLVM) traverse the membrane as a helical segment. At 44–75 (ALNKETKTLVVATVGNTPIKVTLTAKFQHTPA) the chain is on the extracellular side. A helical membrane pass occupies residues 76-96 (FVFFVIANGMASFHNLLMIMV). Over 97-109 (ELCGQKLDYKGMR) the chain is Cytoplasmic. A helical transmembrane segment spans residues 110–130 (LAMVAILDMMTVALVSGGASA). Topologically, residues 131 to 163 (ATFMAELGKNGNSHARWDKICDKFETFCDHGGA) are extracellular. Residues 164-184 (ALIASSAGLILMMIISVMSIM) traverse the membrane as a helical segment. At 185 to 195 (KLLIKPKSDSS) the chain is on the cytoplasmic side.

This sequence belongs to the Casparian strip membrane proteins (CASP) family. As to quaternary structure, homodimer and heterodimers.

It localises to the cell membrane. The polypeptide is CASP-like protein 1B1 (Populus trichocarpa (Western balsam poplar)).